A 414-amino-acid chain; its full sequence is Eukaryotic initiation factor 4A (414 aa).

The Q motif motif lies at 41 to 69 (ESFDDMGLQENLLRGIYAYGFEKPSAIQQ). Residues 72–242 (IVPFCKGLDV…RKFMNKPVRI (171 aa)) enclose the Helicase ATP-binding domain. 85 to 92 (AQSGTGKT) is a binding site for ATP. Residues 190–193 (DEAD) carry the DEAD box motif. A Helicase C-terminal domain is found at 253–414 (GIKQFYVNVE…ELPANVADLL (162 aa)).

It belongs to the DEAD box helicase family. eIF4A subfamily. EIF4F is a multi-subunit complex, the composition of which varies with external and internal environmental conditions. It is composed of at least EIF4A, EIF4E and EIF4G.

The enzyme catalyses ATP + H2O = ADP + phosphate + H(+). ATP-dependent RNA helicase which is a subunit of the eIF4F complex involved in cap recognition and is required for mRNA binding to ribosome. In the current model of translation initiation, eIF4A unwinds RNA secondary structures in the 5'-UTR of mRNAs which is necessary to allow efficient binding of the small ribosomal subunit, and subsequent scanning for the initiator codon. The protein is Eukaryotic initiation factor 4A of Triticum aestivum (Wheat).